A 391-amino-acid chain; its full sequence is Galactarate dehydratase (D-threo-forming) (391 aa).

Substrate is bound at residue Arg15. Positions 42 and 45 each coordinate Mg(2+). Tyr89 serves as a coordination point for substrate. The active-site Proton donor is the Tyr90. Catalysis depends on Tyr164, which acts as the Proton acceptor. Residues Asp193, Glu221, and His246 each contribute to the Mg(2+) site. Thr296 is a binding site for substrate. Residue Thr297 participates in Mg(2+) binding. Arg385 contacts substrate.

This sequence belongs to the mandelate racemase/muconate lactonizing enzyme family. Mg(2+) serves as cofactor.

It catalyses the reaction galactarate = (2S,3R)-dihydroxy-5-oxohexanedioate + H2O. In terms of biological role, catalyzes the regioselective dehydration of galactarate into 2-keto-D-threo-4,5-dihydroxyadipate ((2S,3R)-dihydroxy-5-oxohexanedioate). Is not active on other acid sugars. The chain is Galactarate dehydratase (D-threo-forming) from Oceanobacillus iheyensis (strain DSM 14371 / CIP 107618 / JCM 11309 / KCTC 3954 / HTE831).